The chain runs to 130 residues: Small ribosomal subunit protein uS8 (130 aa).

This sequence belongs to the universal ribosomal protein uS8 family. Part of the 30S ribosomal subunit. Contacts proteins S5 and S12.

Its function is as follows. One of the primary rRNA binding proteins, it binds directly to 16S rRNA central domain where it helps coordinate assembly of the platform of the 30S subunit. This chain is Small ribosomal subunit protein uS8, found in Neisseria meningitidis serogroup C (strain 053442).